Reading from the N-terminus, the 231-residue chain is Ribose-5-phosphate isomerase A (231 aa).

Substrate is bound by residues 28–31, 83–86, and 96–99; these read TGST, DGAD, and KGGG. Residue Glu105 is the Proton acceptor of the active site. Residue Lys123 coordinates substrate.

The protein belongs to the ribose 5-phosphate isomerase family. As to quaternary structure, homodimer.

The enzyme catalyses aldehydo-D-ribose 5-phosphate = D-ribulose 5-phosphate. It participates in carbohydrate degradation; pentose phosphate pathway; D-ribose 5-phosphate from D-ribulose 5-phosphate (non-oxidative stage): step 1/1. Its function is as follows. Catalyzes the reversible conversion of ribose-5-phosphate to ribulose 5-phosphate. The sequence is that of Ribose-5-phosphate isomerase A from Agrobacterium fabrum (strain C58 / ATCC 33970) (Agrobacterium tumefaciens (strain C58)).